We begin with the raw amino-acid sequence, 231 residues long: Ion-translocating oxidoreductase complex subunit E (231 aa).

6 consecutive transmembrane segments (helical) span residues 18-38 (GLVQ…VTNA), 39-59 (LGLG…VSLV), 69-89 (IPVF…LINA), 93-113 (GLYL…VIIG), 128-148 (AFDG…LGAG), and 182-202 (PFLL…LIAG).

Belongs to the NqrDE/RnfAE family. As to quaternary structure, the complex is composed of six subunits: RnfA, RnfB, RnfC, RnfD, RnfE and RnfG.

It localises to the cell inner membrane. In terms of biological role, part of a membrane-bound complex that couples electron transfer with translocation of ions across the membrane. This Shewanella denitrificans (strain OS217 / ATCC BAA-1090 / DSM 15013) protein is Ion-translocating oxidoreductase complex subunit E.